The chain runs to 292 residues: Protoheme IX farnesyltransferase (292 aa).

The next 9 membrane-spanning stretches (helical) occupy residues 13–33, 35–55, 84–104, 106–126, 135–155, 161–181, 206–226, 231–251, and 263–283; these read ILFG…QGHV, FLLL…GCVV, TALI…WFWV, PYSF…YSLW, TIIG…AVTH, ALLI…AIAI, VECL…YCFG, FFLL…IIGF, and LFLF…FTYQ.

It belongs to the UbiA prenyltransferase family. Protoheme IX farnesyltransferase subfamily.

Its subcellular location is the cell inner membrane. It catalyses the reaction heme b + (2E,6E)-farnesyl diphosphate + H2O = Fe(II)-heme o + diphosphate. The protein operates within porphyrin-containing compound metabolism; heme O biosynthesis; heme O from protoheme: step 1/1. Its function is as follows. Converts heme B (protoheme IX) to heme O by substitution of the vinyl group on carbon 2 of heme B porphyrin ring with a hydroxyethyl farnesyl side group. This is Protoheme IX farnesyltransferase from Acinetobacter baylyi (strain ATCC 33305 / BD413 / ADP1).